The following is a 260-amino-acid chain: DNA repair protein RecO (260 aa).

It belongs to the RecO family.

Functionally, involved in DNA repair and RecF pathway recombination. The chain is DNA repair protein RecO from Paracidovorax citrulli (strain AAC00-1) (Acidovorax citrulli).